The primary structure comprises 352 residues: MEAIRKELSRSYQELNEEAEPVAIDPEEAEDEEKEQEEAASAVAPDRDSDRSSPPVRFSRTCLKNFFSVLLILVYLLLMGVAVFLVYQTITDFRDKLKHPVMSVSYKEVNMYDAPGIALYPGKARLLSCEHHWYDHIPPLKDPGQPGENTCVTQDISYIDPYTNKTMKHALIVQGPRDVRRRELVFLQFHLNETKQDFSAIDYLLFSSYEAFLKSHDQVKFMQDCESSFSSWKFSGGFRTWVKMSLVKTKEEDGSQSVEFRQETSVVNFIDRRETPDKGDQLFFVVFEWKDPYIQEIQDIITANPWSMIALLCSVFLVLFKAADFAKLSVKWMIKVRRRHLKKRARELNHIS.

A disordered region spans residues M1 to P55. Residues M1 to N65 lie on the Cytoplasmic side of the membrane. Positions L15–E38 are enriched in acidic residues. The helical transmembrane segment at F66 to V86 threads the bilayer. Over Y87–D299 the chain is Extracellular. Residues I300 to F320 traverse the membrane as a helical segment. The Cytoplasmic segment spans residues K321 to S352.

This sequence belongs to the proton-activated chloride channel family.

It localises to the cell membrane. The enzyme catalyses chloride(in) = chloride(out). Chloride channel gated by pH that facilitates the entry of chloride ions into cells upon exposure to extracellular acidic pH. The sequence is that of Proton-activated chloride channel from Xenopus tropicalis (Western clawed frog).